The chain runs to 435 residues: Adenylosuccinate synthetase (435 aa).

Residues 17–23 (GDEGKGK) and 45–47 (GHT) each bind GTP. Catalysis depends on Asp18, which acts as the Proton acceptor. Positions 18 and 45 each coordinate Mg(2+). IMP is bound by residues 18–21 (DEGK), 43–46 (NAGH), Thr134, Arg148, Gln229, Thr244, and Arg308. His46 serves as the catalytic Proton donor. 304–310 (SVTGRPR) is a substrate binding site. GTP contacts are provided by residues Arg310, 336–338 (KLD), and 418–420 (STG).

It belongs to the adenylosuccinate synthetase family. As to quaternary structure, homodimer. Mg(2+) is required as a cofactor.

It is found in the cytoplasm. The enzyme catalyses IMP + L-aspartate + GTP = N(6)-(1,2-dicarboxyethyl)-AMP + GDP + phosphate + 2 H(+). The protein operates within purine metabolism; AMP biosynthesis via de novo pathway; AMP from IMP: step 1/2. Its function is as follows. Plays an important role in the de novo pathway of purine nucleotide biosynthesis. Catalyzes the first committed step in the biosynthesis of AMP from IMP. In Bordetella pertussis (strain Tohama I / ATCC BAA-589 / NCTC 13251), this protein is Adenylosuccinate synthetase.